The chain runs to 799 residues: Dipeptidyl peptidase family member 1 (799 aa).

Topologically, residues 1 to 31 (MTAEADLLEGYDEELGGNESQKRDCKGITTA) are cytoplasmic. A helical; Signal-anchor for type II membrane protein membrane pass occupies residues 32 to 52 (IVVVLLILVMIFAALVFFTPL). The Lumenal segment spans residues 53-799 (FAAKSFGSWR…FLRQCFYTDK (747 aa)). N64, N138, N267, and N335 each carry an N-linked (GlcNAc...) asparagine glycan. Residues C474 and C477 are joined by a disulfide bond. N481 carries N-linked (GlcNAc...) asparagine glycosylation. C482 and C500 are joined by a disulfide. N-linked (GlcNAc...) asparagine glycosylation occurs at N512. Active-site charge relay system residues include S669, D742, and H774. C689 and C794 are joined by a disulfide.

Belongs to the peptidase S9B family. DPPIV subfamily.

Its subcellular location is the cell membrane. Removes N-terminal dipeptides sequentially from polypeptides. Essential for control of distal tip cell migration. The polypeptide is Dipeptidyl peptidase family member 1 (dpf-1) (Caenorhabditis elegans).